Reading from the N-terminus, the 341-residue chain is Nicotinate-nucleotide--dimethylbenzimidazole phosphoribosyltransferase (341 aa).

E306 (proton acceptor) is an active-site residue.

It belongs to the CobT family.

It catalyses the reaction 5,6-dimethylbenzimidazole + nicotinate beta-D-ribonucleotide = alpha-ribazole 5'-phosphate + nicotinate + H(+). Its pathway is nucleoside biosynthesis; alpha-ribazole biosynthesis; alpha-ribazole from 5,6-dimethylbenzimidazole: step 1/2. Functionally, catalyzes the synthesis of alpha-ribazole-5'-phosphate from nicotinate mononucleotide (NAMN) and 5,6-dimethylbenzimidazole (DMB). The polypeptide is Nicotinate-nucleotide--dimethylbenzimidazole phosphoribosyltransferase (Methylocella silvestris (strain DSM 15510 / CIP 108128 / LMG 27833 / NCIMB 13906 / BL2)).